The following is a 688-amino-acid chain: PR domain zinc finger protein 8 (688 aa).

Residues 16–131 (KAVQQCLTDI…KDEELLVWYG (116 aa)) enclose the SET domain. Residue Tyr130 coordinates S-adenosyl-L-methionine. The segment at 154–182 (YTCLECSQRFQFEFPYVAHLRFRCPKRLH) adopts a C2H2-type 1 zinc-finger fold. Disordered stretches follow at residues 184-309 (TDAN…GCKG) and 397-506 (EEAA…PARS). A compositionally biased stretch (gly residues) spans 192-208 (QGGGLGTKDHGGGGGGK). 2 stretches are compositionally biased toward low complexity: residues 209–219 (EQQQQQQQQQQ) and 275–284 (GSSSCVAAPG). Composition is skewed to gly residues over residues 414-424 (AGGGVAGGGSN) and 470-489 (LGGG…GGGQ). C2H2-type zinc fingers lie at residues 624–647 (NWCA…RSHH) and 665–687 (LKCP…MTSH).

Belongs to the class V-like SAM-binding methyltransferase superfamily. Interacts with BHLHE22. Interacts with EPM2A and NHLRC1. This interaction sequesters EPM2A and NHLRC1 to the nucleus. As to expression, expressed in brain, heart, liver, testes, retina. Highest expression is observed in the retina and hippocampus; moderately expressed in the cortex and cerebellum. In the retina, it is expressed in bipolar and amacrine cells.

It is found in the nucleus. Its function is as follows. Probable histone methyltransferase, preferentially acting on 'Lys-9' of histone H3. Histone methyltransferase activity has not been confirmed in other species. Involved in the control of steroidogenesis through transcriptional repression of steroidogenesis marker genes such as CYP17A1 and LHCGR. Forms with BHLHE22 a transcriptional repressor complex controlling genes involved in neural development and neuronal differentiation. In the retina, it is required for rod bipolar and type 2 OFF-cone bipolar cell survival. This chain is PR domain zinc finger protein 8 (Prdm8), found in Mus musculus (Mouse).